A 1958-amino-acid chain; its full sequence is Rho GTPase-activating protein 21 (1958 aa).

Residues Met-1–Thr-42 are disordered. Residues Asp-13–Ser-32 show a composition bias toward basic and acidic residues. 2 positions are modified to phosphoserine: Ser-36 and Ser-57. The PDZ domain occupies Thr-50–Asp-159. Composition is skewed to polar residues over residues Ser-286–Ser-295, Ser-306–Pro-325, and Ala-418–Gln-436. 2 disordered regions span residues Ser-286 to Pro-325 and Ala-418 to Val-458. Residues Pro-448–Val-458 are compositionally biased toward low complexity. Ser-459 is modified (phosphoserine). 2 positions are modified to omega-N-methylarginine: Arg-554 and Arg-575. Ser-612, Ser-616, and Ser-625 each carry phosphoserine. The segment covering Ser-659–Gly-687 has biased composition (polar residues). The disordered stretch occupies residues Ser-659 to Leu-751. Ser-717 is modified (phosphoserine). The segment covering Leu-729–Pro-742 has biased composition (basic and acidic residues). Thr-747 carries the post-translational modification Phosphothreonine. A phosphoserine mark is found at Ser-857, Ser-862, and Ser-881. A disordered region spans residues Asp-859–Gly-885. Residues Lys-875–Gly-885 are compositionally biased toward basic and acidic residues. At Tyr-882 the chain carries Phosphotyrosine. A phosphoserine mark is found at Ser-924, Ser-926, Ser-954, Ser-1099, and Ser-1115. The interaction with ARF1 and ARF6 stretch occupies residues Ser-930–Pro-1097. The region spanning Asp-931–Asn-1040 is the PH domain. The segment at Leu-1086–Lys-1133 is disordered. The span at Ser-1099 to Thr-1122 shows a compositional bias: basic and acidic residues. In terms of domain architecture, Rho-GAP spans Val-1147–Phe-1339. Disordered regions lie at residues Leu-1348–Lys-1401, Ser-1418–Glu-1575, Ser-1598–Pro-1642, and Arg-1655–Asp-1686. The span at Thr-1349 to Val-1362 shows a compositional bias: polar residues. The segment covering Ser-1383 to Lys-1401 has biased composition (low complexity). Ser-1418, Ser-1432, and Ser-1433 each carry phosphoserine. 2 stretches are compositionally biased toward basic and acidic residues: residues Phe-1441–Gly-1466 and Asn-1477–Leu-1493. A Glycyl lysine isopeptide (Lys-Gly) (interchain with G-Cter in SUMO) cross-link involves residue Lys-1444. A Phosphoserine modification is found at Ser-1504. Residue Thr-1516 is modified to Phosphothreonine. Position 1527 is a phosphoserine (Ser-1527). Residues Ser-1544 to Ala-1559 are compositionally biased toward low complexity. Positions Ser-1592–Ser-1861 are interaction with CTNNA1. Polar residues predominate over residues Arg-1603 to Ala-1612. The span at Ser-1624 to Glu-1634 shows a compositional bias: basic and acidic residues. Phosphoserine is present on Ser-1669. A compositionally biased stretch (polar residues) spans Gly-1671–Asp-1686. Thr-1682 carries the phosphothreonine modification. Position 1742 is a phosphoserine (Ser-1742). The disordered stretch occupies residues Thr-1860–Leu-1958. Positions Gln-1874–Pro-1909 are enriched in polar residues. Ser-1917 carries the post-translational modification Phosphoserine. Over residues Pro-1918–Lys-1931 the composition is skewed to polar residues.

As to quaternary structure, interacts with GTP-bound ARF1 and ARF6. Interacts with CTNNA1. Sumoylated with SUMO2 and SUMO3 in proliferating lymphocytes. As to expression, widely expressed with higher expression in brain, heart, skeletal muscle and placenta.

The protein localises to the golgi apparatus membrane. It is found in the cell junction. The protein resides in the cytoplasmic vesicle membrane. It localises to the cytoplasm. Its subcellular location is the cytoskeleton. In terms of biological role, functions as a GTPase-activating protein (GAP) for RHOA and CDC42. Downstream partner of ARF1 which may control Golgi apparatus structure and function. Also required for CTNNA1 recruitment to adherens junctions. This is Rho GTPase-activating protein 21 (ARHGAP21) from Homo sapiens (Human).